A 77-amino-acid polypeptide reads, in one-letter code: Putative defensin-like protein 118 (77 aa).

A signal peptide spans 1–25 (MSKSTILAIFMIVLVLGKVTKETQG). 4 disulfides stabilise this stretch: Cys29–Cys75, Cys39–Cys58, Cys44–Cys69, and Cys48–Cys71.

The protein belongs to the DEFL family.

Its subcellular location is the secreted. The chain is Putative defensin-like protein 118 (LCR52) from Arabidopsis thaliana (Mouse-ear cress).